Consider the following 376-residue polypeptide: E3 ubiquitin-protein ligase RNF133 (376 aa).

The PA domain maps to 65 to 167; that stretch reads SSTLKRVAGV…LKGTEIFHLI (103 aa). Residues 190–210 traverse the membrane as a helical segment; the sequence is YLVSFVIVTTATLAYFIFYHI. The RING-type; atypical zinc finger occupies 256-297; sequence CVICFERYKPNDIVRILTCKHFFHKNCIDPWILPHGTCPICK. Residues 327-376 are disordered; that stretch reads ETLSPSEEETNNEVSPAGTSDKVIHVEENPTSQNNDIQPHSVVEDVHPSP. Positions 355 to 364 are enriched in polar residues; it reads NPTSQNNDIQ.

In terms of assembly, interacts with E3 ligase UBE2J1. Auto-ubiquitinated. In terms of tissue distribution, expression is testis-specific.

It localises to the endoplasmic reticulum membrane. It catalyses the reaction S-ubiquitinyl-[E2 ubiquitin-conjugating enzyme]-L-cysteine + [acceptor protein]-L-lysine = [E2 ubiquitin-conjugating enzyme]-L-cysteine + N(6)-ubiquitinyl-[acceptor protein]-L-lysine.. The protein operates within protein modification; protein ubiquitination. Its function is as follows. Has E3 ubiquitin-protein ligase activity. Plays a role in male fecundity through the interaction with the E2 ubituitin-protein ligase UBE2J1. The sequence is that of E3 ubiquitin-protein ligase RNF133 from Homo sapiens (Human).